Reading from the N-terminus, the 444-residue chain is MSQSYINVIGAGLAGSEAAYQIAERGIPVKLYEMRGVKSTPQHKTDNFAELVCSNSLRGDALTNAVGLLKEEMRRLGSVILESAEATRVPAGGALAVDRDGFSQMVTEKVVNHPLIEVVRDEITELPTDVITVVATGPLTSDALAEKIHALNDGDGFYFYDAAAPIIDVNTIDMSKVYLKSRYDKGEAAYLNAPMTKQEFMDFHEALVNAEEAPLNSFEKEKYFEGCMPIEVMAKRGIKTMLYGPMKPVGLEYPDDYTGPRDGEFKTPYAVVQLRQDNAAGSLYNIVGFQTHLKWGEQKRVFQMIPSLENAEFVRYGVMHRNSYMDSPNLLEQTYRSKKQPNLFFAGQMTGVEGYVESAASGLVAGINAARLFKEESEAIFPDTTAIGSLAHYITHADSKHFQPMNVNFGIIKELEGERIRDKKARYEKIAERALADLEEFLTV.

10-15 (GAGLAG) is an FAD binding site.

It belongs to the MnmG family. TrmFO subfamily. It depends on FAD as a cofactor.

It localises to the cytoplasm. The catalysed reaction is uridine(54) in tRNA + (6R)-5,10-methylene-5,6,7,8-tetrahydrofolate + NADH + H(+) = 5-methyluridine(54) in tRNA + (6S)-5,6,7,8-tetrahydrofolate + NAD(+). The enzyme catalyses uridine(54) in tRNA + (6R)-5,10-methylene-5,6,7,8-tetrahydrofolate + NADPH + H(+) = 5-methyluridine(54) in tRNA + (6S)-5,6,7,8-tetrahydrofolate + NADP(+). Its function is as follows. Catalyzes the folate-dependent formation of 5-methyl-uridine at position 54 (M-5-U54) in all tRNAs. This chain is Methylenetetrahydrofolate--tRNA-(uracil-5-)-methyltransferase TrmFO, found in Streptococcus pneumoniae (strain Taiwan19F-14).